The chain runs to 314 residues: MIIFNLSSYNPGPFILVGIPGLEQFHVWIGIPFCIIYIVAVVGNCILLYLIVVEHSLHEPMFFFLSMLAMTDLILSTAGVPKALSIFWLGAREITFPGCLTQMFFLHYNFVLDSAILMAMAFDHYVAICSPLRYTTILTPKTIIKSAMGISFRSFCIILPDVFLLTCLPFCRTRIIPHTYCEHIGVAQLACADISINFWYGFCVPIMTVISDVILIAVSYAHILCAVFGLPSQDACQKALGTCGSHVCVILMFYTPAFFSILAHRFGHNVSRTFHIMFANLYIVIPPALNPMVYGVKTKQIRDKVILLFSKGTG.

The Extracellular portion of the chain corresponds to 1–32 (MIIFNLSSYNPGPFILVGIPGLEQFHVWIGIP). A glycan (N-linked (GlcNAc...) asparagine) is linked at N5. A helical membrane pass occupies residues 33–53 (FCIIYIVAVVGNCILLYLIVV). Residues 54 to 59 (EHSLHE) lie on the Cytoplasmic side of the membrane. Residues 60-80 (PMFFFLSMLAMTDLILSTAGV) traverse the membrane as a helical segment. Topologically, residues 81 to 101 (PKALSIFWLGAREITFPGCLT) are extracellular. A disulfide bridge links C99 with C181. Residues 102-122 (QMFFLHYNFVLDSAILMAMAF) traverse the membrane as a helical segment. The Cytoplasmic portion of the chain corresponds to 123–149 (DHYVAICSPLRYTTILTPKTIIKSAMG). Residues 150-170 (ISFRSFCIILPDVFLLTCLPF) traverse the membrane as a helical segment. Residues 171-197 (CRTRIIPHTYCEHIGVAQLACADISIN) are Extracellular-facing. Residues 198-218 (FWYGFCVPIMTVISDVILIAV) form a helical membrane-spanning segment. Over 219–242 (SYAHILCAVFGLPSQDACQKALGT) the chain is Cytoplasmic. The helical transmembrane segment at 243-263 (CGSHVCVILMFYTPAFFSILA) threads the bilayer. Residues 264 to 275 (HRFGHNVSRTFH) are Extracellular-facing. N269 carries an N-linked (GlcNAc...) asparagine glycan. Residues 276–296 (IMFANLYIVIPPALNPMVYGV) form a helical membrane-spanning segment. Residues 297–314 (KTKQIRDKVILLFSKGTG) are Cytoplasmic-facing.

Belongs to the G-protein coupled receptor 1 family.

The protein resides in the membrane. Its function is as follows. Odorant receptor. The sequence is that of Olfactory receptor 52H1 (OR52H1) from Homo sapiens (Human).